The chain runs to 250 residues: 5'-nucleotidase SurE (250 aa).

Residues D8, D9, S40, and N94 each contribute to the a divalent metal cation site.

This sequence belongs to the SurE nucleotidase family. A divalent metal cation is required as a cofactor.

It is found in the cytoplasm. It catalyses the reaction a ribonucleoside 5'-phosphate + H2O = a ribonucleoside + phosphate. Functionally, nucleotidase that shows phosphatase activity on nucleoside 5'-monophosphates. The polypeptide is 5'-nucleotidase SurE (Wolbachia sp. subsp. Drosophila simulans (strain wRi)).